Here is a 503-residue protein sequence, read N- to C-terminus: Maturase K (503 aa).

This sequence belongs to the intron maturase 2 family. MatK subfamily.

Its subcellular location is the plastid. The protein localises to the chloroplast. Its function is as follows. Usually encoded in the trnK tRNA gene intron. Probably assists in splicing its own and other chloroplast group II introns. This is Maturase K from Eucalyptus globulus subsp. globulus (Tasmanian blue gum).